Reading from the N-terminus, the 181-residue chain is Adenylate kinase (181 aa).

Residue 10–15 (GAGKGT) coordinates ATP. Positions 30 to 59 (STGDLFRYNISNGTELGLEAKKYLDAGDLV) are NMP. Residues Thr31, Arg36, 57-59 (DLV), 85-88 (GYPR), and Gln92 each bind AMP. The segment at 126–132 (GRGRDDD) is LID. Position 127 (Arg127) interacts with ATP. Residues Arg129 and Arg140 each coordinate AMP. Gly166 lines the ATP pocket.

This sequence belongs to the adenylate kinase family. Monomer.

Its subcellular location is the cytoplasm. It catalyses the reaction AMP + ATP = 2 ADP. Its pathway is purine metabolism; AMP biosynthesis via salvage pathway; AMP from ADP: step 1/1. Catalyzes the reversible transfer of the terminal phosphate group between ATP and AMP. Plays an important role in cellular energy homeostasis and in adenine nucleotide metabolism. The chain is Adenylate kinase from Mycolicibacterium vanbaalenii (strain DSM 7251 / JCM 13017 / BCRC 16820 / KCTC 9966 / NRRL B-24157 / PYR-1) (Mycobacterium vanbaalenii).